The sequence spans 314 residues: Transcriptional activator RhrA (314 aa).

The HTH araC/xylS-type domain maps to 210–310 (ASIKMRVEQN…GVRPSDLRRL (101 aa)). 2 consecutive DNA-binding regions (H-T-H motif) follow at residues 228–249 (TDVA…SREG) and 277–300 (ISQI…RSRY).

In terms of biological role, transcriptional activator of the rhizobactin regulon. The sequence is that of Transcriptional activator RhrA (rhrA) from Rhizobium meliloti (strain 1021) (Ensifer meliloti).